The chain runs to 494 residues: Beta-glucosidase 29 (494 aa).

An N-terminal signal peptide occupies residues 1 to 28 (MAWLGIGMGRQIVPVLVFVAVLCSGVDA). An a beta-D-glucoside-binding site is contributed by Gln49. Asn103 carries an N-linked (GlcNAc...) asparagine glycan. Residues His138 and 183–184 (NE) contribute to the a beta-D-glucoside site. The active-site Proton donor is the Glu184. Cys203 and Cys211 are oxidised to a cystine. Asn263 carries N-linked (GlcNAc...) asparagine glycosylation. Tyr327 contacts a beta-D-glucoside. Asn352 carries N-linked (GlcNAc...) asparagine glycosylation. Glu398 is a binding site for a beta-D-glucoside. Glu398 (nucleophile) is an active-site residue. A glycan (N-linked (GlcNAc...) asparagine) is linked at Asn406. A beta-D-glucoside contacts are provided by residues Trp447, 454-455 (EW), and Phe463.

This sequence belongs to the glycosyl hydrolase 1 family.

The enzyme catalyses Hydrolysis of terminal, non-reducing beta-D-glucosyl residues with release of beta-D-glucose.. In Oryza sativa subsp. japonica (Rice), this protein is Beta-glucosidase 29 (BGLU29).